The following is a 349-amino-acid chain: MIEFDNLTYLHGKPQGTGLLKANPEDFVVVEDLGFEPDGEGEHILVRILKNGCNTRFVADALAKFLKIHAREVSFAGQKDKHAVTEQWLCARVPGKEMPDLSAFQLEGCQVLEYARHKRKLRLGALKGNAFTLVLREVSNRDDVEQRLIDICVKGVPNYFGAQRFGIGGSNLQGALRWAQTNTPVRDRNKRSFWLSAARSALFNQIVAERLKKADVNQVVDGDALQLAGRGSWFVATTEELAELQRRVNDKELMITAALPGSGEWGTQREALAFEQAAVAAETELQALLVREKVEAARRAMLLYPQQLSWNWWDDVTVEIRFWLPAGSFATSVVRELINTTGDYAHIAE.

A substrate-binding site is contributed by Phe-27. The Nucleophile role is filled by Asp-80. Residue Asn-129 participates in substrate binding. The TRUD domain occupies 155-303 (GVPNYFGAQR…VEAARRAMLL (149 aa)). Phe-329 is a substrate binding site.

Belongs to the pseudouridine synthase TruD family.

The enzyme catalyses uridine(13) in tRNA = pseudouridine(13) in tRNA. Functionally, responsible for synthesis of pseudouridine from uracil-13 in transfer RNAs. The polypeptide is tRNA pseudouridine synthase D (Shigella dysenteriae serotype 1 (strain Sd197)).